Reading from the N-terminus, the 519-residue chain is Carboxyl-terminal-processing peptidase 3, chloroplastic (519 aa).

Residues 186–274 enclose the PDZ domain; sequence YQSFRIGSDG…IKLKNVNGSG (89 aa). Catalysis depends on charge relay system residues serine 407 and lysine 432.

This sequence belongs to the peptidase S41A family.

It localises to the plastid. It is found in the chloroplast thylakoid lumen. It carries out the reaction The enzyme shows specific recognition of a C-terminal tripeptide, Xaa-Yaa-Zaa, in which Xaa is preferably Ala or Leu, Yaa is preferably Ala or Tyr, and Zaa is preferably Ala, but then cleaves at a variable distance from the C-terminus. A typical cleavage is -Ala-Ala-|-Arg-Ala-Ala-Lys-Glu-Asn-Tyr-Ala-Leu-Ala-Ala.. In terms of biological role, protease involved in the C-terminal processing of the chloroplastic D1 protein of photosystem II. This proteolytic processing is necessary to allow the light-driven assembly of the tetranuclear manganese cluster, which is responsible for photosynthetic water oxidation. The sequence is that of Carboxyl-terminal-processing peptidase 3, chloroplastic (CTPA3) from Arabidopsis thaliana (Mouse-ear cress).